The primary structure comprises 161 residues: 2-C-methyl-D-erythritol 2,4-cyclodiphosphate synthase (161 aa).

2 residues coordinate a divalent metal cation: Asp-8 and His-10. 4-CDP-2-C-methyl-D-erythritol 2-phosphate is bound by residues 8 to 10 and 34 to 35; these read DLH and HS. A divalent metal cation is bound at residue His-42. Residues 56–58 and Arg-142 each bind 4-CDP-2-C-methyl-D-erythritol 2-phosphate; that span reads DIG.

This sequence belongs to the IspF family. Homotrimer. A divalent metal cation is required as a cofactor.

The enzyme catalyses 4-CDP-2-C-methyl-D-erythritol 2-phosphate = 2-C-methyl-D-erythritol 2,4-cyclic diphosphate + CMP. The protein operates within isoprenoid biosynthesis; isopentenyl diphosphate biosynthesis via DXP pathway; isopentenyl diphosphate from 1-deoxy-D-xylulose 5-phosphate: step 4/6. Functionally, involved in the biosynthesis of isopentenyl diphosphate (IPP) and dimethylallyl diphosphate (DMAPP), two major building blocks of isoprenoid compounds. Catalyzes the conversion of 4-diphosphocytidyl-2-C-methyl-D-erythritol 2-phosphate (CDP-ME2P) to 2-C-methyl-D-erythritol 2,4-cyclodiphosphate (ME-CPP) with a corresponding release of cytidine 5-monophosphate (CMP). This Treponema denticola (strain ATCC 35405 / DSM 14222 / CIP 103919 / JCM 8153 / KCTC 15104) protein is 2-C-methyl-D-erythritol 2,4-cyclodiphosphate synthase.